The primary structure comprises 555 residues: Glutamine--tRNA ligase (555 aa).

A 'HIGH' region motif is present at residues P34–H44. ATP-binding positions include E35–N37 and H41–S47. Positions 67 and 212 each coordinate L-glutamine. ATP contacts are provided by residues T231, R261–L262, and M269–K271. The short motif at V268 to R272 is the 'KMSKS' region element. The interaction with tRNA stretch occupies residues T317–E324.

Belongs to the class-I aminoacyl-tRNA synthetase family. In terms of assembly, monomer.

The protein resides in the cytoplasm. The enzyme catalyses tRNA(Gln) + L-glutamine + ATP = L-glutaminyl-tRNA(Gln) + AMP + diphosphate. The protein is Glutamine--tRNA ligase of Salmonella schwarzengrund (strain CVM19633).